A 157-amino-acid polypeptide reads, in one-letter code: MAPKADPARRVVADNRKARFHYEITDTVEAGIALTGTEVKSLRGGKATIGEAYAGPSGDEFFLFNAYIPEYLEANRFNHETKRPRRLLLHRRQINKFLGATQREGYTVIPLKIYFNERGRAKVELGLGRGKKLHDKRETAKERDWQRDKARLMRDKG.

The segment at 133–157 (LHDKRETAKERDWQRDKARLMRDKG) is disordered. The segment covering 135 to 157 (DKRETAKERDWQRDKARLMRDKG) has biased composition (basic and acidic residues).

It belongs to the SmpB family.

The protein localises to the cytoplasm. Functionally, required for rescue of stalled ribosomes mediated by trans-translation. Binds to transfer-messenger RNA (tmRNA), required for stable association of tmRNA with ribosomes. tmRNA and SmpB together mimic tRNA shape, replacing the anticodon stem-loop with SmpB. tmRNA is encoded by the ssrA gene; the 2 termini fold to resemble tRNA(Ala) and it encodes a 'tag peptide', a short internal open reading frame. During trans-translation Ala-aminoacylated tmRNA acts like a tRNA, entering the A-site of stalled ribosomes, displacing the stalled mRNA. The ribosome then switches to translate the ORF on the tmRNA; the nascent peptide is terminated with the 'tag peptide' encoded by the tmRNA and targeted for degradation. The ribosome is freed to recommence translation, which seems to be the essential function of trans-translation. The sequence is that of SsrA-binding protein from Methylobacterium sp. (strain 4-46).